The chain runs to 219 residues: N-(5'-phosphoribosyl)anthranilate isomerase (219 aa).

The protein belongs to the TrpF family.

It catalyses the reaction N-(5-phospho-beta-D-ribosyl)anthranilate = 1-(2-carboxyphenylamino)-1-deoxy-D-ribulose 5-phosphate. Its pathway is amino-acid biosynthesis; L-tryptophan biosynthesis; L-tryptophan from chorismate: step 3/5. The protein is N-(5'-phosphoribosyl)anthranilate isomerase of Mesorhizobium japonicum (strain LMG 29417 / CECT 9101 / MAFF 303099) (Mesorhizobium loti (strain MAFF 303099)).